A 190-amino-acid chain; its full sequence is Threonylcarbamoyl-AMP synthase (190 aa).

The 184-residue stretch at 7–190 (TGSIAAVVDL…ALTGELFRQG (184 aa)) folds into the YrdC-like domain.

It belongs to the SUA5 family. TsaC subfamily.

The protein resides in the cytoplasm. It carries out the reaction L-threonine + hydrogencarbonate + ATP = L-threonylcarbamoyladenylate + diphosphate + H2O. Required for the formation of a threonylcarbamoyl group on adenosine at position 37 (t(6)A37) in tRNAs that read codons beginning with adenine. Catalyzes the conversion of L-threonine, HCO(3)(-)/CO(2) and ATP to give threonylcarbamoyl-AMP (TC-AMP) as the acyladenylate intermediate, with the release of diphosphate. The chain is Threonylcarbamoyl-AMP synthase from Salmonella paratyphi A (strain ATCC 9150 / SARB42).